Reading from the N-terminus, the 248-residue chain is MATNAKPVYQRILLKLSGEALQGAEGFGIDASVLDRMAQEVKELVELGIQVGVVIGGGNLFRGAGLAQAGMNRVVGDHMGMLATVMNGLAMRDALHRAYVNARLMSAIPLNGVCDNYSWAEAISLLRHNRVVIFAAGTGNPFFTTDSAACLRGIEIEADVVLKATKVDGVYSADPVKNPDATLYEQLTYQDVLERELKVMDLAAFTLARDHNLPIRVFNMNKPGALRRVVMGENEGTLITKEVAAVTK.

15 to 18 contacts ATP; that stretch reads KLSG. Residues 23 to 28 form an involved in allosteric activation by GTP region; sequence GAEGFG. Gly57 provides a ligand contact to UMP. The ATP site is built by Gly58 and Arg62. Residues Asp77 and 138–145 each bind UMP; that span reads TGNPFFTT. Thr165, Tyr171, and Asp174 together coordinate ATP.

Belongs to the UMP kinase family. In terms of assembly, homohexamer.

The protein resides in the cytoplasm. The catalysed reaction is UMP + ATP = UDP + ADP. Its pathway is pyrimidine metabolism; CTP biosynthesis via de novo pathway; UDP from UMP (UMPK route): step 1/1. Its activity is regulated as follows. Allosterically activated by GTP. Inhibited by UTP. Its function is as follows. Catalyzes the reversible phosphorylation of UMP to UDP. In Yersinia enterocolitica serotype O:8 / biotype 1B (strain NCTC 13174 / 8081), this protein is Uridylate kinase.